Here is a 176-residue protein sequence, read N- to C-terminus: Ribosome rescue factor SmrB (176 aa).

Residues 93–168 (LDLHGYRQSE…GDAALLVLID (76 aa)) enclose the Smr domain.

It belongs to the SmrB family. In terms of assembly, associates with collided ribosomes, but not with correctly translating polysomes.

Acts as a ribosome collision sensor. Detects stalled/collided disomes (pairs of ribosomes where the leading ribosome is stalled and a second ribosome has collided with it) and endonucleolytically cleaves mRNA at the 5' boundary of the stalled ribosome. Stalled/collided disomes form a new interface (primarily via the 30S subunits) that binds SmrB. Cleaved mRNA becomes available for tmRNA ligation, leading to ribosomal subunit dissociation and rescue of stalled ribosomes. The protein is Ribosome rescue factor SmrB of Shewanella sp. (strain MR-4).